The sequence spans 428 residues: Cytochrome c biogenesis protein CcsB (428 aa).

Transmembrane regions (helical) follow at residues 14-34, 72-92, and 162-182; these read LKFA…GTFI, SLWF…CSFR, and IGPL…AYGS.

This sequence belongs to the Ccs1/CcsB family. In terms of assembly, may interact with CcsA.

It is found in the cellular thylakoid membrane. In terms of biological role, required during biogenesis of c-type cytochromes (cytochrome c6 and cytochrome f) at the step of heme attachment. This chain is Cytochrome c biogenesis protein CcsB, found in Prochlorococcus marinus (strain MIT 9301).